A 221-amino-acid polypeptide reads, in one-letter code: Eukaryotic translation initiation factor 3 subunit K (221 aa).

The PCI domain occupies 46-215 (YDLEANLACL…EKIEFDNLAP (170 aa)).

This sequence belongs to the eIF-3 subunit K family. As to quaternary structure, component of the eukaryotic translation initiation factor 3 (eIF-3) complex.

It localises to the cytoplasm. Component of the eukaryotic translation initiation factor 3 (eIF-3) complex, which is involved in protein synthesis of a specialized repertoire of mRNAs and, together with other initiation factors, stimulates binding of mRNA and methionyl-tRNAi to the 40S ribosome. The eIF-3 complex specifically targets and initiates translation of a subset of mRNAs involved in cell proliferation. The polypeptide is Eukaryotic translation initiation factor 3 subunit K (Anopheles gambiae (African malaria mosquito)).